We begin with the raw amino-acid sequence, 421 residues long: Acyl-coenzyme A thioesterase 6 (421 aa).

Active-site charge relay system residues include serine 232, aspartate 326, and histidine 360. The Peroxisome targeting signal signature appears at 419–421 (SKI).

Belongs to the C/M/P thioester hydrolase family.

It is found in the peroxisome. The protein localises to the cytoplasm. The catalysed reaction is pristanoyl-CoA + H2O = 2,6,10,14-tetramethylpentadecanoate + CoA + H(+). It carries out the reaction phytanoyl-CoA + H2O = 3,7,11,15-tetramethylhexadecanoate + CoA + H(+). It functions in the pathway lipid metabolism; fatty acid metabolism. Functionally, catalyzes the hydrolysis of acyl-CoAs into free fatty acids and coenzyme A (CoASH), regulating their respective intracellular levels. Catalyzes the hydrolysis of phytanoyl-CoA and pristanoyl-CoA, two methyl-branched fatty acids derived from phytol, that enter the body via the diet. The protein is Acyl-coenzyme A thioesterase 6 of Homo sapiens (Human).